The following is a 311-amino-acid chain: Acetyl-coenzyme A carboxylase carboxyl transferase subunit alpha (311 aa).

One can recognise a CoA carboxyltransferase C-terminal domain in the interval 36 to 286 (KLEKEVEKTF…KEYFIKSLAE (251 aa)).

This sequence belongs to the AccA family. As to quaternary structure, acetyl-CoA carboxylase is a heterohexamer composed of biotin carboxyl carrier protein (AccB), biotin carboxylase (AccC) and two subunits each of ACCase subunit alpha (AccA) and ACCase subunit beta (AccD).

It is found in the cytoplasm. The enzyme catalyses N(6)-carboxybiotinyl-L-lysyl-[protein] + acetyl-CoA = N(6)-biotinyl-L-lysyl-[protein] + malonyl-CoA. Its pathway is lipid metabolism; malonyl-CoA biosynthesis; malonyl-CoA from acetyl-CoA: step 1/1. Its function is as follows. Component of the acetyl coenzyme A carboxylase (ACC) complex. First, biotin carboxylase catalyzes the carboxylation of biotin on its carrier protein (BCCP) and then the CO(2) group is transferred by the carboxyltransferase to acetyl-CoA to form malonyl-CoA. The sequence is that of Acetyl-coenzyme A carboxylase carboxyl transferase subunit alpha from Aliarcobacter butzleri (strain RM4018) (Arcobacter butzleri).